The sequence spans 174 residues: Ferritin, heavy subunit (174 aa).

One can recognise a Ferritin-like diiron domain in the interval 7–156; it reads QNFHKDCEAA…DWVTNLRRLG (150 aa). Residues Glu24, Glu59, His62, Glu104, and Gln138 each contribute to the Fe cation site.

This sequence belongs to the ferritin family. In liver, forms a heteromer consisting of middle and heavy subunits. The functional molecule forms a roughly spherical shell with a diameter of 12 nm and contains a central cavity into which the insoluble mineral iron core is deposited. Liver (at protein level).

It carries out the reaction 4 Fe(2+) + O2 + 4 H(+) = 4 Fe(3+) + 2 H2O. Functionally, stores iron in a soluble, non-toxic, readily available form. Important for iron homeostasis. Has ferroxidase activity. Iron is taken up in the ferrous form and deposited as ferric hydroxides after oxidation. Also plays a role in delivery of iron to cells. Mediates iron uptake in capsule cells of the developing kidney. Delivery to lysosomes is mediated by the cargo receptor NCOA4 for autophagic degradation and release of iron. The protein is Ferritin, heavy subunit of Trematomus newnesi (Dusky notothen).